Consider the following 293-residue polypeptide: 4-hydroxy-tetrahydrodipicolinate synthase (293 aa).

T47 lines the pyruvate pocket. The Proton donor/acceptor role is filled by Y136. K164 functions as the Schiff-base intermediate with substrate in the catalytic mechanism. Pyruvate is bound at residue I206.

It belongs to the DapA family. In terms of assembly, homotetramer; dimer of dimers.

Its subcellular location is the cytoplasm. The catalysed reaction is L-aspartate 4-semialdehyde + pyruvate = (2S,4S)-4-hydroxy-2,3,4,5-tetrahydrodipicolinate + H2O + H(+). It functions in the pathway amino-acid biosynthesis; L-lysine biosynthesis via DAP pathway; (S)-tetrahydrodipicolinate from L-aspartate: step 3/4. In terms of biological role, catalyzes the condensation of (S)-aspartate-beta-semialdehyde [(S)-ASA] and pyruvate to 4-hydroxy-tetrahydrodipicolinate (HTPA). This is 4-hydroxy-tetrahydrodipicolinate synthase from Listeria monocytogenes serovar 1/2a (strain ATCC BAA-679 / EGD-e).